The following is a 539-amino-acid chain: Acid-sensing ion channel 4 (539 aa).

At 1–68 (MPIEIVCKIK…GPGPHGLRRT (68 aa)) the chain is on the cytoplasmic side. A helical membrane pass occupies residues 69–89 (LWALALLTSLAAFLYQAAGLA). At 90 to 438 (RGYLTRPHLV…EQRAAYGLSA (349 aa)) the chain is on the extracellular side. Intrachain disulfides connect cysteine 118–cysteine 202 and cysteine 180–cysteine 187. 2 N-linked (GlcNAc...) asparagine glycosylation sites follow: asparagine 191 and asparagine 243. Cystine bridges form between cysteine 296/cysteine 375, cysteine 318/cysteine 371, cysteine 322/cysteine 369, cysteine 331/cysteine 353, and cysteine 333/cysteine 345. A glycan (N-linked (GlcNAc...) asparagine) is linked at asparagine 376. The helical transmembrane segment at 439-459 (LLGDLGGQMGLFIGASILTLL) threads the bilayer. Positions 452-454 (GAS) match the GAS motif; ion selectivity filter motif. Residues 460-539 (EILDYIYEVS…PGGLFEDFAC (80 aa)) are Cytoplasmic-facing. Residues 501-531 (EQSPCPSRGRVEGGGVSSLLPNHHHPHGPPG) are disordered.

Belongs to the amiloride-sensitive sodium channel (TC 1.A.6) family. ASIC4 subfamily. As to quaternary structure, homotrimer. Heterotrimer; with other ASIC proteins producing functional channels. In terms of tissue distribution, expressed in pituitary gland. Weakly expressed in brain, vestibular system and organ of Corti.

The protein localises to the cell membrane. Functionally, does not exhibit measurable stand-alone pH-gated sodium channel activity but may form pH-gated heterotrimeric sodium channels. Its activity could also depend on alternative gating mechanisms. This chain is Acid-sensing ion channel 4, found in Homo sapiens (Human).